Consider the following 603-residue polypeptide: Protein SHORT-ROOT 2 (603 aa).

Disordered stretches follow at residues 11–58 and 106–140; these read HHHH…HSHS and DFSSSSSSRQFHSGTGAPSSAPVPPPPSATTSSAG. Over residues 31 to 44 the composition is skewed to low complexity; sequence SYPSSRGSTSSPSS. The span at 45 to 58 shows a compositional bias: basic residues; that stretch reads HHTHNHTYYHHSHS. Positions 108–125 are enriched in low complexity; that stretch reads SSSSSSRQFHSGTGAPSS. The GRAS domain maps to 179–602; that stretch reads AAPSSSGRWA…QPVVWASAWK (424 aa). The segment at 186-249 is leucine repeat I (LRI); it reads RWAAQLLMEC…LTTSGPRTLR (64 aa). Positions 268–354 are VHIID; that stretch reads ALKFQELSPW…DTPHLSITTV (87 aa). A VHIID motif is present at residues 318 to 322; the sequence is LHILD. The segment at 370–406 is leucine repeat II (LRII); sequence EIGQRLEKFARLMGVPFSFRAVHHAGDLADLDLAALD. Residues 416–514 form a PFYRE region; that stretch reads LAVNCVNALR…ERAVGRAIVD (99 aa). Positions 517–602 are SAW; the sequence is SCPASQSAER…QPVVWASAWK (86 aa).

It belongs to the GRAS family. Does not interact with SCR1.

It localises to the nucleus. Its function is as follows. Putative transcription factor involved in asymmetric cell division. The protein is Protein SHORT-ROOT 2 (SHR2) of Oryza sativa subsp. indica (Rice).